Here is a 316-residue protein sequence, read N- to C-terminus: L-lactate dehydrogenase (316 aa).

NAD(+) is bound by residues valine 16, aspartate 37, lysine 42, tyrosine 68, and 82-83 (GA). 2 residues coordinate substrate: glutamine 85 and arginine 91. NAD(+) contacts are provided by residues serine 104, 121–123 (AAN), and serine 146. A substrate-binding site is contributed by 123 to 126 (NPVD). 151–154 (DSAR) is a substrate binding site. Residues arginine 156 and histidine 171 each coordinate beta-D-fructose 1,6-bisphosphate. Histidine 178 (proton acceptor) is an active-site residue. A Phosphotyrosine modification is found at tyrosine 222. Residue threonine 231 coordinates substrate.

Belongs to the LDH/MDH superfamily. LDH family. As to quaternary structure, homotetramer.

The protein resides in the cytoplasm. The catalysed reaction is (S)-lactate + NAD(+) = pyruvate + NADH + H(+). It participates in fermentation; pyruvate fermentation to lactate; (S)-lactate from pyruvate: step 1/1. Allosterically activated by fructose 1,6-bisphosphate (FBP). Its function is as follows. Catalyzes the conversion of lactate to pyruvate. The protein is L-lactate dehydrogenase of Staphylococcus epidermidis (strain ATCC 12228 / FDA PCI 1200).